We begin with the raw amino-acid sequence, 852 residues long: Leucine--tRNA ligase (852 aa).

The 'HIGH' region motif lies at Pro-42–His-52. A disordered region spans residues Asn-586–Glu-606. Residues Lys-614 to Ser-618 carry the 'KMSKS' region motif. ATP is bound at residue Lys-617.

This sequence belongs to the class-I aminoacyl-tRNA synthetase family.

The protein resides in the cytoplasm. The enzyme catalyses tRNA(Leu) + L-leucine + ATP = L-leucyl-tRNA(Leu) + AMP + diphosphate. The sequence is that of Leucine--tRNA ligase from Picosynechococcus sp. (strain ATCC 27264 / PCC 7002 / PR-6) (Agmenellum quadruplicatum).